The following is a 149-amino-acid chain: MAKEFSRTRRIAQQLQQELAQVLQRDMKDPRIGFVTVNDVDVSRDLSYAKVFVTFFEEDKAVVQEKLNALISAAPYIRTLVAGRMKLRVMPELRFVYDSSLVEGMRMSNLVSQVINQDKAKQQQFGSADEVLNEDEGATDDTDDTKGKD.

Residues 125 to 149 are disordered; that stretch reads FGSADEVLNEDEGATDDTDDTKGKD. The span at 131–143 shows a compositional bias: acidic residues; that stretch reads VLNEDEGATDDTD.

Belongs to the RbfA family. Monomer. Binds 30S ribosomal subunits, but not 50S ribosomal subunits or 70S ribosomes.

It is found in the cytoplasm. One of several proteins that assist in the late maturation steps of the functional core of the 30S ribosomal subunit. Associates with free 30S ribosomal subunits (but not with 30S subunits that are part of 70S ribosomes or polysomes). Required for efficient processing of 16S rRNA. May interact with the 5'-terminal helix region of 16S rRNA. The sequence is that of Ribosome-binding factor A from Shewanella sp. (strain W3-18-1).